Consider the following 318-residue polypeptide: uncharacterized protein (318 aa).

A coiled-coil region spans residues 67 to 157; that stretch reads LAFDELEKEK…SLKAIQTSQE (91 aa). Positions 172-318 are disordered; the sequence is ESTNKVEKNA…KGFFARLFNL (147 aa). Basic and acidic residues-rich tracts occupy residues 175–193 and 219–236; these read NKVE…KDSK and KVDK…EKAS. Polar residues predominate over residues 237 to 248; that stretch reads VEQSKNENAAET. Basic and acidic residues-rich tracts occupy residues 249 to 274 and 300 to 310; these read SNKE…HAEA and SEPKPQEEKKG.

This is an uncharacterized protein from Staphylococcus aureus (strain Mu50 / ATCC 700699).